Here is a 514-residue protein sequence, read N- to C-terminus: 2,3-bisphosphoglycerate-independent phosphoglycerate mutase (514 aa).

2 residues coordinate Mn(2+): Asp-14 and Ser-64. Catalysis depends on Ser-64, which acts as the Phosphoserine intermediate. Substrate is bound by residues His-125, 155-156 (RD), Arg-187, Arg-193, 263-266 (RADR), and Lys-336. Mn(2+) is bound by residues Asp-403, His-407, Asp-444, His-445, and His-463.

The protein belongs to the BPG-independent phosphoglycerate mutase family. Monomer. It depends on Mn(2+) as a cofactor.

The enzyme catalyses (2R)-2-phosphoglycerate = (2R)-3-phosphoglycerate. It participates in carbohydrate degradation; glycolysis; pyruvate from D-glyceraldehyde 3-phosphate: step 3/5. Its function is as follows. Catalyzes the interconversion of 2-phosphoglycerate and 3-phosphoglycerate. The sequence is that of 2,3-bisphosphoglycerate-independent phosphoglycerate mutase from Shewanella sp. (strain MR-7).